The chain runs to 572 residues: Probable transporter MCH1 (572 aa).

Polar residues predominate over residues 1–29 (MSSSAPDDTQASRLDADQISTRSSSYASD). Residues 1–39 (MSSSAPDDTQASRLDADQISTRSSSYASDNDTDSTETRI) form a disordered region. An N-linked (GlcNAc...) asparagine glycan is attached at Asn30. A run of 10 helical transmembrane segments spans residues 50–70 (LLAF…VVFS), 89–109 (AVAI…GYIC), 116–136 (PLAL…AGVY), 159–179 (FLML…MAAV), 193–213 (GLAL…LSQA), 232–252 (VFRF…LGTF), 335–355 (LAFL…GTII), 426–446 (FMAF…SGLV), 459–479 (LVGA…TIIW), and 488–508 (YGLI…VYSA). Asn515 carries an N-linked (GlcNAc...) asparagine glycan. A helical membrane pass occupies residues 539-559 (PTYWAETITVWIAVGLLLWAW).

The protein belongs to the major facilitator superfamily.

It is found in the vacuole membrane. In terms of biological role, probable transporter. This is Probable transporter MCH1 (MCH1) from Gibberella zeae (strain ATCC MYA-4620 / CBS 123657 / FGSC 9075 / NRRL 31084 / PH-1) (Wheat head blight fungus).